Here is a 173-residue protein sequence, read N- to C-terminus: MPIILGVDPGSRITGYGVIQCQGRQQIYLGSGCIRTQSDDLPSRLKVIFDGISEIIRQYQPDEFAIERVFLAKNADSALKLGQARGAAIVAATNAQLPVAEYSATQIKNAVVGTGRAQKSQVQHMVQQILKLPAAPQADAADALGVALCHFHTYQSLIAMGGKASVRTYGRYR.

Active-site residues include Asp-8, Glu-67, and Asp-139. Positions 8, 67, and 139 each coordinate Mg(2+).

The protein belongs to the RuvC family. In terms of assembly, homodimer which binds Holliday junction (HJ) DNA. The HJ becomes 2-fold symmetrical on binding to RuvC with unstacked arms; it has a different conformation from HJ DNA in complex with RuvA. In the full resolvosome a probable DNA-RuvA(4)-RuvB(12)-RuvC(2) complex forms which resolves the HJ. Mg(2+) is required as a cofactor.

The protein resides in the cytoplasm. It catalyses the reaction Endonucleolytic cleavage at a junction such as a reciprocal single-stranded crossover between two homologous DNA duplexes (Holliday junction).. In terms of biological role, the RuvA-RuvB-RuvC complex processes Holliday junction (HJ) DNA during genetic recombination and DNA repair. Endonuclease that resolves HJ intermediates. Cleaves cruciform DNA by making single-stranded nicks across the HJ at symmetrical positions within the homologous arms, yielding a 5'-phosphate and a 3'-hydroxyl group; requires a central core of homology in the junction. The consensus cleavage sequence is 5'-(A/T)TT(C/G)-3'. Cleavage occurs on the 3'-side of the TT dinucleotide at the point of strand exchange. HJ branch migration catalyzed by RuvA-RuvB allows RuvC to scan DNA until it finds its consensus sequence, where it cleaves and resolves the cruciform DNA. The protein is Crossover junction endodeoxyribonuclease RuvC of Shewanella loihica (strain ATCC BAA-1088 / PV-4).